The following is a 290-amino-acid chain: Fat storage-inducing transmembrane protein 1 (290 aa).

Topologically, residues 1–18 are lumenal; sequence MERGPVVGAGLGARARIR. A helical transmembrane segment spans residues 19–39; that stretch reads TLLGCLVKVLLWVASALLYFG. At 40 to 54 the chain is on the cytoplasmic side; sequence SEQAARLLGSPCLRR. A helical membrane pass occupies residues 55 to 75; it reads LYHAWLAAVVIFGPLLQFHVN. At 76-94 the chain is on the lumenal side; that stretch reads PRTIFASHGNFFNIKFVNS. A helical membrane pass occupies residues 95–115; the sequence is AWGWTCTFLGGFVLLVVFLAT. Residues 116 to 141 are Cytoplasmic-facing; sequence RRVAVTARHLSRLVVGAAVWRGAGRA. The helical transmembrane segment at 142–162 threads the bilayer; sequence FLLIEDLTGSCFEPLPQGLLL. The Lumenal segment spans residues 163 to 187; it reads HELPDRRSRLAAGHQWRGYTVSSHT. Residue H186 is part of the active site. A helical transmembrane segment spans residues 188–208; the sequence is FLLTFCCLLMAEEAAVFAKYL. Over 209-220 the chain is Cytoplasmic; sequence AHGLPAGAPLRL. The helical transmembrane segment at 221–241 threads the bilayer; sequence VFLLNVLLLGLWNFLLLCTVI. Topologically, residues 242-249 are lumenal; sequence YFHQYTHK. Residue H244 is part of the active site. The helical transmembrane segment at 250–270 threads the bilayer; sequence VVGAAVGTFAWYLTYGSWYHQ. The Cytoplasmic segment spans residues 271-290; sequence PWSPGSPGHGLFTHPSRKHN.

It belongs to the FIT family. FIT1 subfamily.

The protein resides in the endoplasmic reticulum membrane. Plays an important role in the formation of lipid droplets (LDs) which are storage organelles at the center of lipid and energy homeostasis. Directly binds to diacylglycerol (DAGs) and triacylglycerol. The chain is Fat storage-inducing transmembrane protein 1 from Sus scrofa (Pig).